The sequence spans 357 residues: Histidinol-phosphate aminotransferase 2 (357 aa).

N6-(pyridoxal phosphate)lysine is present on lysine 215.

The protein belongs to the class-II pyridoxal-phosphate-dependent aminotransferase family. Histidinol-phosphate aminotransferase subfamily. As to quaternary structure, homodimer. Pyridoxal 5'-phosphate serves as cofactor.

It carries out the reaction L-histidinol phosphate + 2-oxoglutarate = 3-(imidazol-4-yl)-2-oxopropyl phosphate + L-glutamate. The protein operates within amino-acid biosynthesis; L-histidine biosynthesis; L-histidine from 5-phospho-alpha-D-ribose 1-diphosphate: step 7/9. The chain is Histidinol-phosphate aminotransferase 2 from Thiobacillus denitrificans (strain ATCC 25259 / T1).